Here is a 262-residue protein sequence, read N- to C-terminus: Proline-rich protein 23C (262 aa).

Disordered regions lie at residues methionine 1–proline 52 and valine 225–glutamate 262. Residues proline 226 to histidine 242 are compositionally biased toward pro residues. Residues alanine 243–proline 252 are compositionally biased toward basic and acidic residues. A compositionally biased stretch (basic residues) spans cysteine 253–glutamate 262.

This sequence belongs to the PRR23 family.

This is Proline-rich protein 23C (PRR23C) from Homo sapiens (Human).